The primary structure comprises 324 residues: Methionyl-tRNA formyltransferase (324 aa).

Residue 109–112 (SLLP) coordinates (6S)-5,6,7,8-tetrahydrofolate. Positions 305–324 (LHPGESFHKATQDNQGASET) are disordered.

Belongs to the Fmt family.

The enzyme catalyses L-methionyl-tRNA(fMet) + (6R)-10-formyltetrahydrofolate = N-formyl-L-methionyl-tRNA(fMet) + (6S)-5,6,7,8-tetrahydrofolate + H(+). Attaches a formyl group to the free amino group of methionyl-tRNA(fMet). The formyl group appears to play a dual role in the initiator identity of N-formylmethionyl-tRNA by promoting its recognition by IF2 and preventing the misappropriation of this tRNA by the elongation apparatus. The sequence is that of Methionyl-tRNA formyltransferase from Nitrosomonas europaea (strain ATCC 19718 / CIP 103999 / KCTC 2705 / NBRC 14298).